We begin with the raw amino-acid sequence, 54 residues long: Salt stress-induced hydrophobic peptide ESI3 (54 aa).

A run of 2 helical transmembrane segments spans residues 2 to 22 (GSAT…GVFL) and 34 to 54 (LLLT…VLVV).

It belongs to the UPF0057 (PMP3) family.

The protein resides in the membrane. The polypeptide is Salt stress-induced hydrophobic peptide ESI3 (ESI3) (Thinopyrum elongatum (Tall wheatgrass)).